Here is a 291-residue protein sequence, read N- to C-terminus: Inositol-1-monophosphatase (291 aa).

Mg(2+)-binding residues include glutamate 83, aspartate 104, isoleucine 106, and aspartate 107. Residue glutamate 83 participates in substrate binding. Substrate is bound by residues 106-109, arginine 206, and aspartate 235; that span reads IDGT. Position 235 (aspartate 235) interacts with Mg(2+).

It belongs to the inositol monophosphatase superfamily. It depends on Mg(2+) as a cofactor.

The catalysed reaction is a myo-inositol phosphate + H2O = myo-inositol + phosphate. This chain is Inositol-1-monophosphatase (suhB), found in Mycobacterium leprae (strain TN).